A 466-amino-acid polypeptide reads, in one-letter code: Hepatocyte nuclear factor 3-alpha (466 aa).

A DNA-binding region (fork-head) is located at residues 169 to 260 (AKPPYSYISL…GNMFENGCYL (92 aa)). The essential for DNA binding stretch occupies residues 251-288 (GNMFENGCYLRRQKRFKCEKQPGAGGGSGGGGSKGVPE). Residues 269 to 358 (EKQPGAGGGS…ASSSAPPISS (90 aa)) form a disordered region. The segment covering 273-284 (GAGGGSGGGGSK) has biased composition (gly residues). Phosphoserine occurs at positions 303 and 327. 2 stretches are compositionally biased toward low complexity: residues 318 to 328 (GAPAPGPAASP) and 344 to 358 (ELKSPASSSAPPISS).

In terms of assembly, binds DNA as a monomer. Interacts with FOXA2. Interacts with NKX2-1. Interacts with HDAC7. Interacts with the histone H3-H4 heterodimer. Associates with nucleosomes containing histone H2A. Interacts with AR. Interacts with NR0B2. As to expression, liver.

The protein resides in the nucleus. Its function is as follows. Transcription factor that is involved in embryonic development, establishment of tissue-specific gene expression and regulation of gene expression in differentiated tissues. Is thought to act as a 'pioneer' factor opening the compacted chromatin for other proteins through interactions with nucleosomal core histones and thereby replacing linker histones at target enhancer and/or promoter sites. Binds DNA with the consensus sequence 5'-[AC]A[AT]T[AG]TT[GT][AG][CT]T[CT]-3'. Proposed to play a role in translating the epigenetic signatures into cell type-specific enhancer-driven transcriptional programs. Involved in glucose homeostasis; activates the GCG promoter. Involved in the development of multiple endoderm-derived organ systems such as the liver, pancreas, lungs and prostate; FOXA1 and FOXA2 seem to have at least in part redundant roles. Modulates the transcriptional activity of nuclear hormone receptors. Is required for maximal gene activation mediated by AR in the prostate. Negatively regulates AR transactivation via competition with coactivators such as NCOA2. Is involved in ESR1-mediated transcription. Involved in regulation of apoptosis. Involved in cell cycle regulation. Originally described as a transcription activator for a number of liver genes such as AFP, albumin, tyrosine aminotransferase, PEPCK, etc. Interacts with the cis-acting regulatory regions of these genes. This chain is Hepatocyte nuclear factor 3-alpha (Foxa1), found in Rattus norvegicus (Rat).